We begin with the raw amino-acid sequence, 447 residues long: ATP-dependent protease ATPase subunit HslU (447 aa).

ATP contacts are provided by residues isoleucine 17 and 59–64; that span reads GVGKTE. Residues 136–160 are disordered; that stretch reads PPARGGFQGEPTAEEKPTEKKESAT. Over residues 148–159 the composition is skewed to basic and acidic residues; the sequence is AEEKPTEKKESA. Residues aspartate 260, glutamate 325, and arginine 397 each contribute to the ATP site.

The protein belongs to the ClpX chaperone family. HslU subfamily. As to quaternary structure, a double ring-shaped homohexamer of HslV is capped on each side by a ring-shaped HslU homohexamer. The assembly of the HslU/HslV complex is dependent on binding of ATP.

It is found in the cytoplasm. Its function is as follows. ATPase subunit of a proteasome-like degradation complex; this subunit has chaperone activity. The binding of ATP and its subsequent hydrolysis by HslU are essential for unfolding of protein substrates subsequently hydrolyzed by HslV. HslU recognizes the N-terminal part of its protein substrates and unfolds these before they are guided to HslV for hydrolysis. This chain is ATP-dependent protease ATPase subunit HslU, found in Coxiella burnetii (strain RSA 331 / Henzerling II).